The following is a 1575-amino-acid chain: Ras GTPase-activating-like protein IQGAP2 (1575 aa).

A Phosphoserine modification is found at Ser16. The region spanning 41-156 (LCHLEEAKRW…YCIHALSLYL (116 aa)) is the Calponin-homology (CH) domain. Position 356 is a phosphothreonine (Thr356). The WW domain maps to 594-627 (ESSEGSWVTLNVQEKYNYYYNTDSKEGSWVPPEL). Ser595 and Ser599 each carry phosphoserine. 3 consecutive IQ domains span residues 690–719 (QTES…VFAG), 720–749 (NVDS…YFED), and 750–779 (HKNE…SENP). Thr782, Thr881, Thr1002, and Thr1269 each carry phosphothreonine. A Ras-GAP domain is found at 933 to 1182 (YLLLKLFKTA…QEFRKYFQEA (250 aa)). Ser1279 and Ser1461 each carry phosphoserine.

Functionally, binds to activated CDC42 and RAC1 but does not seem to stimulate their GTPase activity. Associates with calmodulin. The protein is Ras GTPase-activating-like protein IQGAP2 (Iqgap2) of Mus musculus (Mouse).